Here is a 94-residue protein sequence, read N- to C-terminus: Co-chaperonin GroES (94 aa).

The protein belongs to the GroES chaperonin family. As to quaternary structure, heptamer of 7 subunits arranged in a ring. Interacts with the chaperonin GroEL.

It is found in the cytoplasm. Functionally, together with the chaperonin GroEL, plays an essential role in assisting protein folding. The GroEL-GroES system forms a nano-cage that allows encapsulation of the non-native substrate proteins and provides a physical environment optimized to promote and accelerate protein folding. GroES binds to the apical surface of the GroEL ring, thereby capping the opening of the GroEL channel. This chain is Co-chaperonin GroES, found in Ehrlichia canis (strain Jake).